We begin with the raw amino-acid sequence, 431 residues long: Polyprenol-phosphate-mannose-dependent alpha-(1-2)-phosphatidylinositol pentamannoside mannosyltransferase (431 aa).

The next 10 helical transmembrane spans lie at A43–P63, F108–W128, G148–I168, F175–P195, L202–V222, A229–G249, G290–W310, L332–I352, I364–A384, and L397–A417.

This sequence belongs to the glycosyltransferase 87 family.

It is found in the cell membrane. Its pathway is phospholipid metabolism; phosphatidylinositol metabolism. Functionally, catalyzes the alpha-1,2 addition of a mannose residue from polyprenol-phosphate-mannose (PPM) to a monoacyl phosphatidylinositol tetramannoside (AcPIM4) to generate a monoacyl phosphatidylinositol pentamannoside (AcPIM5). This Mycobacterium tuberculosis (strain CDC 1551 / Oshkosh) protein is Polyprenol-phosphate-mannose-dependent alpha-(1-2)-phosphatidylinositol pentamannoside mannosyltransferase (pimE).